A 175-amino-acid polypeptide reads, in one-letter code: Inner membrane protein p54 (175 aa).

The helical transmembrane segment at cysteine 32–phenylalanine 52 threads the bilayer. Over residues glutamine 79–threonine 89 the composition is skewed to polar residues. Residues glutamine 79–aspartate 121 are disordered. The tract at residues tyrosine 141–threonine 153 is interaction with host DYNLL1.

Belongs to the asfivirus envelope protein p54 family. As to quaternary structure, interacts with the host light chain cytoplasmic dynein DYNLL1; this interaction is critical for intracellular microtubule-dependent virus transport toward viral factories.

It is found in the virion membrane. It localises to the host cytoplasm. The protein localises to the host cytoskeleton. The protein resides in the host endoplasmic reticulum membrane. Inner envelope protein involved, through its interaction with host dynein, in the intracellular microtubule-dependent transport of viral capsid toward viral factories. Seems to induce caspase-3 activation and apoptosis. Plays a role in virion morphogenesis by recruiting and transforming the host ER membranes into the precursors of the viral envelope. Involved in virus attachment to the host cell. This chain is Inner membrane protein p54, found in African swine fever virus (isolate Pig/Kenya/KEN-50/1950) (ASFV).